The chain runs to 370 residues: Queuine tRNA-ribosyltransferase (370 aa).

Residue D89 is the Proton acceptor of the active site. Residues 89–93 (DSGGF), D143, Q187, and G214 contribute to the substrate site. Positions 245 to 251 (GVGKPED) are RNA binding. The active-site Nucleophile is D264. The interval 269 to 273 (TRNAR) is RNA binding; important for wobble base 34 recognition. Zn(2+) is bound by residues C302, C304, C307, and H333.

It belongs to the queuine tRNA-ribosyltransferase family. Homodimer. Within each dimer, one monomer is responsible for RNA recognition and catalysis, while the other monomer binds to the replacement base PreQ1. The cofactor is Zn(2+).

The enzyme catalyses 7-aminomethyl-7-carbaguanine + guanosine(34) in tRNA = 7-aminomethyl-7-carbaguanosine(34) in tRNA + guanine. The protein operates within tRNA modification; tRNA-queuosine biosynthesis. Functionally, catalyzes the base-exchange of a guanine (G) residue with the queuine precursor 7-aminomethyl-7-deazaguanine (PreQ1) at position 34 (anticodon wobble position) in tRNAs with GU(N) anticodons (tRNA-Asp, -Asn, -His and -Tyr). Catalysis occurs through a double-displacement mechanism. The nucleophile active site attacks the C1' of nucleotide 34 to detach the guanine base from the RNA, forming a covalent enzyme-RNA intermediate. The proton acceptor active site deprotonates the incoming PreQ1, allowing a nucleophilic attack on the C1' of the ribose to form the product. After dissociation, two additional enzymatic reactions on the tRNA convert PreQ1 to queuine (Q), resulting in the hypermodified nucleoside queuosine (7-(((4,5-cis-dihydroxy-2-cyclopenten-1-yl)amino)methyl)-7-deazaguanosine). The polypeptide is Queuine tRNA-ribosyltransferase (Baumannia cicadellinicola subsp. Homalodisca coagulata).